The following is a 313-amino-acid chain: Dehydrogenase/reductase SDR family member 1 (313 aa).

Ile-19 lines the NAD(+) pocket. The residue at position 21 (Arg-21) is an Omega-N-methylarginine. Asp-64 serves as a coordination point for NAD(+). Ser-151 contributes to the substrate binding site. NAD(+) contacts are provided by Tyr-163, Lys-167, and Thr-198. The Proton acceptor role is filled by Tyr-163.

The protein belongs to the short-chain dehydrogenases/reductases (SDR) family.

It localises to the endoplasmic reticulum. The catalysed reaction is 17alpha-estradiol + NADP(+) = estrone + NADPH + H(+). It catalyses the reaction testosterone + NADP(+) = androst-4-ene-3,17-dione + NADPH + H(+). The enzyme catalyses prostaglandin E1 + NADPH + H(+) = prostaglandin F1 + NADP(+). It carries out the reaction isatin + NADPH + H(+) = 3-hydroxyindolin-2-one + NADP(+). In terms of biological role, NADPH-dependent oxidoreductase which catalyzes the reduction of some steroids (estrone, androstene-3,17-dione and cortisone) as well as prostaglandin E1, isatin and xenobiotics in vitro. May have a role in steroid and/or xenobiotic metabolism. The sequence is that of Dehydrogenase/reductase SDR family member 1 from Mus musculus (Mouse).